The following is a 478-amino-acid chain: Pyruvate kinase (478 aa).

A substrate-binding site is contributed by Arg-36. 3 residues coordinate K(+): Asn-38, Ser-40, and Asp-70. Position 38–41 (38–41 (NFSH)) interacts with ATP. 2 residues coordinate ATP: Arg-77 and Lys-160. Glu-225 serves as a coordination point for Mg(2+). Residues Gly-251, Asp-252, and Thr-284 each contribute to the substrate site. Asp-252 provides a ligand contact to Mg(2+).

It belongs to the pyruvate kinase family. In terms of assembly, homotetramer. Mg(2+) serves as cofactor. K(+) is required as a cofactor.

It carries out the reaction pyruvate + ATP = phosphoenolpyruvate + ADP + H(+). It functions in the pathway carbohydrate degradation; glycolysis; pyruvate from D-glyceraldehyde 3-phosphate: step 5/5. Its activity is regulated as follows. Allosterically activated by AMP and by several sugar phosphates. Belongs to type II PK. The chain is Pyruvate kinase (pykA) from Haemophilus influenzae (strain ATCC 51907 / DSM 11121 / KW20 / Rd).